Reading from the N-terminus, the 481-residue chain is Argininosuccinate synthase (481 aa).

Residues 17 to 25 (AFSGGLDTS) and Ala43 contribute to the ATP site. Tyr99 lines the L-citrulline pocket. ATP is bound by residues Gly129 and Thr131. Thr131, Asn135, and Asp136 together coordinate L-aspartate. An L-citrulline-binding site is contributed by Asn135. Asp136 is a binding site for ATP. L-citrulline-binding residues include Arg139 and Ser192. Asp194 is an ATP binding site. Thr201, Glu203, and Glu280 together coordinate L-citrulline.

Belongs to the argininosuccinate synthase family. Type 2 subfamily. Homotetramer.

The protein resides in the cytoplasm. The catalysed reaction is L-citrulline + L-aspartate + ATP = 2-(N(omega)-L-arginino)succinate + AMP + diphosphate + H(+). The protein operates within amino-acid biosynthesis; L-arginine biosynthesis; L-arginine from L-ornithine and carbamoyl phosphate: step 2/3. The protein is Argininosuccinate synthase (argG) of Streptomyces coelicolor (strain ATCC BAA-471 / A3(2) / M145).